The sequence spans 316 residues: BRCA2 and CDKN1A-interacting protein (316 aa).

Positions 1–57 (MASKAKKRAVGNGIQRPLGAPGQREEEEEEEDEVEDEEEDEDDSDEEEDEVDEIVDE) are disordered. Over residues 25-57 (EEEEEEEDEVEDEEEDEDDSDEEEDEVDEIVDE) the composition is skewed to acidic residues. 2 positions are modified to phosphoserine: Ser-44 and Ser-114. The interaction with BRCA2 stretch occupies residues 61 to 169 (IEFEAYSISD…EQSMVEQLDK (109 aa)). The interaction with CDKN1A stretch occupies residues 163 to 261 (MVEQLDKLLN…NAEEEFFYEK (99 aa)). Phosphoserine is present on Ser-283.

It belongs to the BCP1 family. In terms of assembly, interacts with BRCA2, CDKN1A and MTDH/LYRIC. Interacts with DCTN1/p150-glued and ACTR1A/ARP1. Interacts with alpha-, beta- and gamma-tubulins. Interacts with TENT5C; the interaction has no effect on TENT5C poly(A) polymerase function. In terms of tissue distribution, expressed in the testes (at protein level).

It localises to the nucleus. Its subcellular location is the cytoplasm. The protein localises to the cytoskeleton. The protein resides in the microtubule organizing center. It is found in the centrosome. It localises to the centriole. Its subcellular location is the spindle pole. Functionally, during interphase, required for microtubule organizing and anchoring activities. During mitosis, required for the organization and stabilization of the spindle pole. May promote cell cycle arrest by enhancing the inhibition of CDK2 activity by CDKN1A. May be required for repair of DNA damage by homologous recombination in conjunction with BRCA2. May not be involved in non-homologous end joining (NHEJ). The polypeptide is BRCA2 and CDKN1A-interacting protein (Bccip) (Mus musculus (Mouse)).